The primary structure comprises 440 residues: Methionine aminopeptidase 2-2 (440 aa).

Positions 1 to 102 (MAAQVPTEAL…KGQEEEYRDE (102 aa)) are disordered. Positions 36–46 (DSDDSDEEGEE) are enriched in acidic residues. The segment covering 56–70 (AKKKKKNKKKKKKKS) has biased composition (basic residues). His-194 provides a ligand contact to substrate. The a divalent metal cation site is built by Asp-214, Asp-225, and His-294. A substrate-binding site is contributed by His-302. Glu-327 and Glu-421 together coordinate a divalent metal cation.

Belongs to the peptidase M24A family. Methionine aminopeptidase eukaryotic type 2 subfamily. The cofactor is Co(2+). It depends on Zn(2+) as a cofactor. Mn(2+) is required as a cofactor. Fe(2+) serves as cofactor.

The protein localises to the cytoplasm. It catalyses the reaction Release of N-terminal amino acids, preferentially methionine, from peptides and arylamides.. Functionally, cotranslationally removes the N-terminal methionine from nascent proteins. The N-terminal methionine is often cleaved when the second residue in the primary sequence is small and uncharged (Met-Ala-, Cys, Gly, Pro, Ser, Thr, or Val). The polypeptide is Methionine aminopeptidase 2-2 (Colletotrichum graminicola (strain M1.001 / M2 / FGSC 10212) (Maize anthracnose fungus)).